A 31-amino-acid chain; its full sequence is Cytochrome b6-f complex subunit 6 (31 aa).

A helical transmembrane segment spans residues 4 to 24 (VVSYLGILAAFALVTIGIFLV).

Belongs to the PetL family. The 4 large subunits of the cytochrome b6-f complex are cytochrome b6, subunit IV (17 kDa polypeptide, PetD), cytochrome f and the Rieske protein, while the 4 small subunits are PetG, PetL, PetM and PetN. The complex functions as a dimer.

It localises to the plastid. The protein localises to the chloroplast thylakoid membrane. Component of the cytochrome b6-f complex, which mediates electron transfer between photosystem II (PSII) and photosystem I (PSI), cyclic electron flow around PSI, and state transitions. PetL is important for photoautotrophic growth as well as for electron transfer efficiency and stability of the cytochrome b6-f complex. This Mesostigma viride (Green alga) protein is Cytochrome b6-f complex subunit 6.